Reading from the N-terminus, the 245-residue chain is U21-ctenitoxin-Pn1a (245 aa).

The 245-residue stretch at 1 to 245 (IVYGTVTTPG…FRSWMDKVMT (245 aa)) folds into the Peptidase S1 domain. Residues Cys-30 and Cys-46 are joined by a disulfide bond. Catalysis depends on charge relay system residues His-45 and Asp-95. 2 disulfides stabilise this stretch: Cys-161/Cys-183 and Cys-192/Cys-221. The active-site Charge relay system is Ser-196.

In terms of tissue distribution, expressed by the venom gland.

Its subcellular location is the secreted. Its function is as follows. Protease. Hydrolyzes gelatin and succinyl casein. The polypeptide is U21-ctenitoxin-Pn1a (Phoneutria nigriventer (Brazilian armed spider)).